Reading from the N-terminus, the 291-residue chain is NAD kinase (291 aa).

Asp73 acts as the Proton acceptor in catalysis. NAD(+) is bound by residues Asp73 to Gly74, Asn147 to Asp148, Arg175, Asp177, Thr188 to Ser193, Ala212, and Gln246.

It belongs to the NAD kinase family. Requires a divalent metal cation as cofactor.

It is found in the cytoplasm. It catalyses the reaction NAD(+) + ATP = ADP + NADP(+) + H(+). Functionally, involved in the regulation of the intracellular balance of NAD and NADP, and is a key enzyme in the biosynthesis of NADP. Catalyzes specifically the phosphorylation on 2'-hydroxyl of the adenosine moiety of NAD to yield NADP. This chain is NAD kinase, found in Polaromonas sp. (strain JS666 / ATCC BAA-500).